A 382-amino-acid polypeptide reads, in one-letter code: Na(+)/H(+) antiporter NhaA 2 (382 aa).

11 helical membrane passes run 7–27 (MVLSETFPGILLIFFTFLALL), 58–78 (LDLWINDGLIAIFFLCIGLEL), 94–114 (SLPIFGALGGMITPALIFAAI), 124–144 (GWAIPTATDIAFAVGILMLLG), 153–173 (LFLLSLAIFDDLGAIVIIALF), 178–198 (LSALAIIICLFCIFALLLLNY), 199–219 (YHITHLSLYVLVGVVLWIAML), 255–275 (NPWVVYFILPLFAFANAGIDI), 291–311 (IILGLFLGKQLGVFTFCFIAI), 327–347 (FYGICILTGIGFTMSLFIDGL), and 361–381 (LAILIASFLSAIVGFIYLKIV).

It belongs to the NhaA Na(+)/H(+) (TC 2.A.33) antiporter family.

It localises to the cell inner membrane. It catalyses the reaction Na(+)(in) + 2 H(+)(out) = Na(+)(out) + 2 H(+)(in). Na(+)/H(+) antiporter that extrudes sodium in exchange for external protons. This Campylobacter jejuni subsp. jejuni serotype O:6 (strain 81116 / NCTC 11828) protein is Na(+)/H(+) antiporter NhaA 2.